The chain runs to 299 residues: ATP phosphoribosyltransferase (299 aa).

It belongs to the ATP phosphoribosyltransferase family. Long subfamily. The cofactor is Mg(2+).

It localises to the cytoplasm. It catalyses the reaction 1-(5-phospho-beta-D-ribosyl)-ATP + diphosphate = 5-phospho-alpha-D-ribose 1-diphosphate + ATP. Its pathway is amino-acid biosynthesis; L-histidine biosynthesis; L-histidine from 5-phospho-alpha-D-ribose 1-diphosphate: step 1/9. With respect to regulation, feedback inhibited by histidine. Its function is as follows. Catalyzes the condensation of ATP and 5-phosphoribose 1-diphosphate to form N'-(5'-phosphoribosyl)-ATP (PR-ATP). Has a crucial role in the pathway because the rate of histidine biosynthesis seems to be controlled primarily by regulation of HisG enzymatic activity. In Campylobacter jejuni subsp. doylei (strain ATCC BAA-1458 / RM4099 / 269.97), this protein is ATP phosphoribosyltransferase.